The chain runs to 272 residues: MASSSSNRQFSHRNANTFLTYPKCPENPEIACQMIWELVVRWIPKYILCAREAHKDGSLHLHALLQTEKPVRISDSRFFDINGFHPNIQSAKSVNRVRDYILKEPLAVFERGTFIPRKSPFLGKSDSEVKEKKPSKDEIMRDIISHATSKAEYLSMIQKELPFDWSTKLQYFEYSANKLFPEIQEEFTNPHPPSSPDLLCNESINDWLQPNIFQVSPEAYMLLQPTCYTLEDAISDLQWMDSVSSHQMKDQESRASTSSAQQEPENLLGPEA.

One can recognise a CRESS-DNA virus Rep endonuclease domain in the interval 11-114 (SHRNANTFLT…PLAVFERGTF (104 aa)). The RCR-1 signature appears at 18 to 21 (FLTY). The a divalent metal cation site is built by Glu-52, His-60, and His-62. The RCR-2 motif lies at 60 to 62 (HLH). The active-site For DNA cleavage activity is the Tyr-100. The short motif at 100–103 (YILK) is the RCR-3 element. Glu-104 lines the a divalent metal cation pocket. The oligomerization stretch occupies residues 175–187 (SANKLFPEIQEEF). Residues 198–202 (LLCNE) carry the LXCXE motif, interaction with host RBR1 motif. Residues 245–272 (SHQMKDQESRASTSSAQQEPENLLGPEA) are disordered. Polar residues predominate over residues 254 to 264 (RASTSSAQQEP).

It belongs to the geminiviridae Rep protein family. As to quaternary structure, homooligomer. Interacts (via LXCXE domain) with host retinoblastoma-related protein 1 (RBR1), and may thereby deregulate the host cell cycle. Part of the C- and V-complexes which are RepA-Rep-DNA complexes involved in the c-sense and v-sense transcription. Requires Mg(2+) as cofactor. It depends on Mn(2+) as a cofactor.

The protein resides in the host nucleus. It is found in the host cytoplasm. Its function is as follows. Implicated in enhancement of V-sense gene expression. Acts a an inhibitor of C-sense gene transcription. In Maize streak virus genotype A (isolate South Africa) (MSV), this protein is Replication-associated protein A.